The primary structure comprises 277 residues: Ribonuclease HII (277 aa).

The 231-residue stretch at 20–250 folds into the RNase H type-2 domain; that stretch reads KLIIGLDEAG…SKKLLKKIED (231 aa). Residues Asp26, Glu27, and Asp141 each coordinate a divalent metal cation.

This sequence belongs to the RNase HII family. Requires Mn(2+) as cofactor. Mg(2+) serves as cofactor.

It localises to the cytoplasm. The enzyme catalyses Endonucleolytic cleavage to 5'-phosphomonoester.. Functionally, endonuclease that specifically degrades the RNA of RNA-DNA hybrids. This chain is Ribonuclease HII, found in Methanococcus aeolicus (strain ATCC BAA-1280 / DSM 17508 / OCM 812 / Nankai-3).